A 730-amino-acid polypeptide reads, in one-letter code: MTVGTLSVVSSTASDTASHVSDTRKRQYQRDEALRKKIISELGKKSGNFESPVRKIRRNGEPGTVDSAALDPALTVHMQSLVTETAQLMAAKRQNCVLVVDDDEQLAGIVTATDIATRCVGAGLNARQTLIADIMSTSPLCITSDTRFDDALLLMIEHKFRHLPVVSDGGPDGSAGDEGDVIGIINMRACLREPLNRIARQQEAAQKLVEALEGAQEEIENKSVSGNTNSSSVSGNHAAEFLEYVESLKKKASGLEIMSLIDSSEEPFLVGTRTTVAEATESMARSGVSAVLVMDNGAVSGVFTAHDVVLRVLAAGLDPYRSSVIRVMTPHPDCALASLRVSTALERMIEGKFSNLPVVDESDAIIGMLSLFHLATAIEQTPEEEEEVFDQAENDAGIEPSNGFEDQQQQLLGNSNEVVENYDVNPPLPLNPLPSNTQQSESTYEYSARQLPKPPVQAWQNENLSSNNKPQEYVGVENDYNFSNNPPTAMSEQSFHPSVSQKPMDTPENGSNSFAASPYLQPYNSASQLAPSYVGSLPQYHGNPSFVEQALQDLVQPTDSASQIFPLNPQSPSQFTIKYRSIAGRVHRLRLDGINSVSDLRTAVEEREKEQLVTLTYIDDEGDVVELVSDSDLREAILLARRRGLPRLEVRGVAAFTNHLESSHPPISTVDSSIGSASVVEKGVANSIVDIHQPTAKADKGNSKKPIYIGIVSSSIVILAVSMWYLRRKR.

Positions 1–27 (MTVGTLSVVSSTASDTASHVSDTRKRQ) are disordered. Residues 7 to 20 (SVVSSTASDTASHV) are compositionally biased toward low complexity. CBS domains follow at residues 69-127 (ALDP…LNAR), 135-200 (MSTS…RIAR), 263-319 (SSEE…GLDP), and 328-385 (MTPH…PEEE). 2 helical membrane passes run 290–310 (AVLV…DVVL) and 358–378 (VVDE…ATAI). Residues 420–517 (ENYDVNPPLP…ENGSNSFAAS (98 aa)) are disordered. Polar residues-rich tracts occupy residues 458 to 470 (AWQN…NNKP) and 480 to 515 (YNFS…NSFA). Residues 572 to 649 (PSQFTIKYRS…ARRRGLPRLE (78 aa)) form the PB1 domain. Residues 706–726 (PIYIGIVSSSIVILAVSMWYL) traverse the membrane as a helical segment.

Its subcellular location is the cytoplasm. The protein resides in the nucleus membrane. In terms of biological role, has a role in meiosis. This chain is Meiotically up-regulated gene 70 protein (mug70), found in Schizosaccharomyces pombe (strain 972 / ATCC 24843) (Fission yeast).